Reading from the N-terminus, the 356-residue chain is MNITKLTPWFLFSCLILLSDYIKVNSSISPSSEQTQEDGFFGFKPTKLFVFGDSYADTGNTPFLIVPSWRFPNGITFPGIPTGRFSDGRVSTDYLAKYIGVRTPITYKWGKYGRPRLAVKRGMNFAYGGAGAFETMFKLVPTASVQIDSFEQLLMRNVYSPADLNSSVAFFSIIGNDYLTYDRRNGSEEGRSALTRKVVKQILLDVKRIKDLGVRKVLVALSPPQKCLPKLVTPKGCDTNDTSTYLHNSLLRKGLIKLNDKEINNNDKSFMTLDLYNAFVTIFKNKGVSGVSTFPDPFKACCATKRGTFCGDRSLSGKKLYTLCDDPKSFFFWDNVHISDQGWRSVFSLLLPDSQF.

The signal sequence occupies residues 1–26 (MNITKLTPWFLFSCLILLSDYIKVNS). N25 is a glycosylation site (N-linked (GlcNAc...) asparagine). Catalysis depends on S54, which acts as the Nucleophile. N165, N185, and N240 each carry an N-linked (GlcNAc...) asparagine glycan. Active-site residues include D334 and H337.

This sequence belongs to the 'GDSL' lipolytic enzyme family.

The protein resides in the secreted. The protein is GDSL esterase/lipase At2g36325 of Arabidopsis thaliana (Mouse-ear cress).